An 870-amino-acid polypeptide reads, in one-letter code: Translation initiation factor IF-2 (870 aa).

A disordered region spans residues 49 to 284 (SFQNSAPAEK…TKRKERPLPE (236 aa)). 2 stretches are compositionally biased toward basic and acidic residues: residues 70 to 81 (RKNEKKQEDNAG) and 94 to 109 (QNND…RDHS). Positions 116–127 (KPKAAALLQQFK) are enriched in low complexity. Composition is skewed to basic and acidic residues over residues 144 to 159 (AKKE…KKEQ) and 168 to 183 (NKES…EKKV). Over residues 254-279 (RKRRKNKNKKRKQEQKPKKQITKRKE) the composition is skewed to basic residues. A tr-type G domain is found at 371–540 (KRPPVVTIMG…LLQADMMELK (170 aa)). Residues 380–387 (GHVDHGKT) are G1. 380 to 387 (GHVDHGKT) lines the GTP pocket. The tract at residues 405–409 (GITQK) is G2. The tract at residues 426–429 (DTPG) is G3. Residues 426-430 (DTPGH) and 480-483 (NKMD) each bind GTP. Residues 480–483 (NKMD) form a G4 region. Positions 516 to 518 (SAR) are G5.

This sequence belongs to the TRAFAC class translation factor GTPase superfamily. Classic translation factor GTPase family. IF-2 subfamily.

It localises to the cytoplasm. One of the essential components for the initiation of protein synthesis. Protects formylmethionyl-tRNA from spontaneous hydrolysis and promotes its binding to the 30S ribosomal subunits. Also involved in the hydrolysis of GTP during the formation of the 70S ribosomal complex. The protein is Translation initiation factor IF-2 of Lactobacillus helveticus (strain DPC 4571).